The chain runs to 520 residues: Amphoterin-induced protein 2 (520 aa).

An N-terminal signal peptide occupies residues 1–37 (MSLRFHTLPTLPRAVKPGCRELLCLLVIAVMVSPSSS). An LRRNT domain is found at 38–67 (GLCPTACICATDIVSCTNKNLSKVPGNLFR). The Extracellular portion of the chain corresponds to 38–398 (GLCPTACICA…SHHAHEAFNT (361 aa)). Cystine bridges form between Cys40-Cys46 and Cys44-Cys53. Residue Asn57 is glycosylated (N-linked (GlcNAc...) asparagine). LRR repeat units lie at residues 68 to 89 (LIKR…WIPV), 93 to 114 (KLST…SFST), 117 to 138 (NLKC…MFQE), 141 to 162 (VLEV…AFGG), 165 to 186 (HLQK…LYVG), and 192 to 213 (DLTF…HINL). The N-linked (GlcNAc...) asparagine glycan is linked to Asn103. Positions 227 to 283 (NPFVCDCSLYSLLTFWYRRHFNSVTDFKHDYTCRLWLDSRHSHQLLLLQDSFLNCSH) constitute an LRRCT domain. 2 disulfide bridges follow: Cys231/Cys259 and Cys233/Cys281. Asn280, Asn287, Asn344, Asn372, Asn380, Asn383, and Asn387 each carry an N-linked (GlcNAc...) asparagine glycan. Residues 288 to 378 (GSFHALGFIH…RLLNETVDIM (91 aa)) enclose the Ig-like C2-type domain. A disulfide bridge connects residues Cys309 and Cys362. The chain crosses the membrane as a helical span at residues 399–419 (AFTTLAACVVSIVLVLLYLYL). The Cytoplasmic segment spans residues 420 to 520 (TPCPCKCRDK…FSDTPFVAST (101 aa)). 2 disordered regions span residues 437 to 458 (QSNA…AEDR) and 498 to 520 (SRAK…VAST).

Belongs to the immunoglobulin superfamily. AMIGO family. Binds itself as well as AMIGO1 and AMIGO3. As to expression, highest levels in the lung. High levels in cerebellar granule neurons and Purkinje cells. Also in pyramidal cells between CA1 and CA3 regions of the hippocampus and granule cells of the dentate gyrus.

The protein resides in the cell membrane. Its subcellular location is the nucleus. Its function is as follows. Required for depolarization-dependent survival of cultured cerebellar granule neurons. May mediate homophilic as well as heterophilic cell-cell interaction with AMIGO1 or AMIGO3. May contribute to signal transduction through its intracellular domain. The sequence is that of Amphoterin-induced protein 2 from Rattus norvegicus (Rat).